Reading from the N-terminus, the 214-residue chain is Histidine biosynthesis bifunctional protein HisIE (214 aa).

Residues 1 to 114 are phosphoribosyl-AMP cyclohydrolase; the sequence is MDLSAVRFDE…LEGEKDLGFV (114 aa). The segment at 115–214 is phosphoribosyl-ATP pyrophosphohydrolase; sequence VGQVYATIKE…RSPYDGSHGN (100 aa).

In the N-terminal section; belongs to the PRA-CH family. It in the C-terminal section; belongs to the PRA-PH family.

Its subcellular location is the cytoplasm. The enzyme catalyses 1-(5-phospho-beta-D-ribosyl)-ATP + H2O = 1-(5-phospho-beta-D-ribosyl)-5'-AMP + diphosphate + H(+). It catalyses the reaction 1-(5-phospho-beta-D-ribosyl)-5'-AMP + H2O = 1-(5-phospho-beta-D-ribosyl)-5-[(5-phospho-beta-D-ribosylamino)methylideneamino]imidazole-4-carboxamide. The protein operates within amino-acid biosynthesis; L-histidine biosynthesis; L-histidine from 5-phospho-alpha-D-ribose 1-diphosphate: step 2/9. It functions in the pathway amino-acid biosynthesis; L-histidine biosynthesis; L-histidine from 5-phospho-alpha-D-ribose 1-diphosphate: step 3/9. This chain is Histidine biosynthesis bifunctional protein HisIE, found in Thermus thermophilus (strain ATCC BAA-163 / DSM 7039 / HB27).